Here is a 58-residue protein sequence, read N- to C-terminus: Small ribosomal subunit protein bS21 (58 aa).

The disordered stretch occupies residues Asp-39 to Arg-58. Positions Val-43–Arg-58 are enriched in basic residues.

This sequence belongs to the bacterial ribosomal protein bS21 family.

This is Small ribosomal subunit protein bS21 from Chlamydia abortus (strain DSM 27085 / S26/3) (Chlamydophila abortus).